The sequence spans 536 residues: Ecdysone receptor (536 aa).

Residues 1–114 (MKTENLIVTT…GPVPRQQEEL (114 aa)) are modulating. Positions 77 to 107 (SPNSKLDDGNMSVHMGDGLDGKKSSSKKGPV) are disordered. NR C4-type zinc fingers lie at residues 115-135 (CLVCGDRASGYHYNALTCEGC) and 151-175 (CKFGHECEMDMYMRRKCQECRLKKC). Residues 115 to 187 (CLVCGDRASG…VGMRPECVVP (73 aa)) constitute a DNA-binding region (nuclear receptor). One can recognise an NR LBD domain in the interval 278–514 (NQVAVIYKLI…FLEEVWDVGD (237 aa)).

This sequence belongs to the nuclear hormone receptor family. NR1 subfamily.

It localises to the nucleus. Its function is as follows. Receptor for ecdysone. Binds to ecdysone response elements (ECRES). This Chironomus tentans (Midge) protein is Ecdysone receptor (EcR).